Reading from the N-terminus, the 75-residue chain is Protein Tlp homolog (75 aa).

The tract at residues 52 to 75 (RREALDGMREEIKDEARDKKNGYM) is disordered.

The protein belongs to the Tlp family.

The sequence is that of Protein Tlp homolog from Clostridium botulinum (strain Okra / Type B1).